The primary structure comprises 506 residues: Tyrosine-protein kinase isoform SRK4 (506 aa).

2 stretches are compositionally biased toward polar residues: residues 1 to 10 and 18 to 31; these read MGSCCSSQDG and AGSTVDSHELSQSV. Residues 1-53 form a disordered region; the sequence is MGSCCSSQDGDGNGKATAGSTVDSHELSQSVKGKIKQPEPKPKPPPQVPPAQD. In terms of domain architecture, SH3 spans 54–116; that stretch reads VKYPIYVGKY…PSNYVAEYKS (63 aa). An SH2 domain is found at 122-214; the sequence is WFFGQVKRVD…GLCVNLKGPC (93 aa). One can recognise a Protein kinase domain in the interval 240-493; it reads IKLLRGLGAG…TLSWQLEEFF (254 aa). Residues 246 to 254 and Lys268 each bind ATP; that span reads LGAGQFGEV. The Proton acceptor role is filled by Asp359.

It belongs to the protein kinase superfamily. Tyr protein kinase family.

The protein localises to the cytoplasm. It catalyses the reaction L-tyrosyl-[protein] + ATP = O-phospho-L-tyrosyl-[protein] + ADP + H(+). This is Tyrosine-protein kinase isoform SRK4 (SRK1) from Spongilla lacustris (Freshwater sponge).